The primary structure comprises 182 residues: Ribosome-recycling factor (182 aa).

This sequence belongs to the RRF family.

The protein resides in the cytoplasm. In terms of biological role, responsible for the release of ribosomes from messenger RNA at the termination of protein biosynthesis. May increase the efficiency of translation by recycling ribosomes from one round of translation to another. The sequence is that of Ribosome-recycling factor from Mycoplasma capricolum subsp. capricolum (strain California kid / ATCC 27343 / NCTC 10154).